We begin with the raw amino-acid sequence, 128 residues long: Large ribosomal subunit protein bL12 (128 aa).

The protein belongs to the bacterial ribosomal protein bL12 family. In terms of assembly, homodimer. Part of the ribosomal stalk of the 50S ribosomal subunit. Forms a multimeric L10(L12)X complex, where L10 forms an elongated spine to which 2 to 4 L12 dimers bind in a sequential fashion. Binds GTP-bound translation factors.

Its function is as follows. Forms part of the ribosomal stalk which helps the ribosome interact with GTP-bound translation factors. Is thus essential for accurate translation. This chain is Large ribosomal subunit protein bL12, found in Petrotoga mobilis (strain DSM 10674 / SJ95).